We begin with the raw amino-acid sequence, 138 residues long: Basic phospholipase A2 PL-X' (138 aa).

The signal sequence occupies residues M1 to G16. Cystine bridges form between C42-C131, C44-C60, C59-C111, C65-C138, C66-C104, C73-C97, and C91-C102. Residues Y43, G45, and G47 each coordinate Ca(2+). H63 is an active-site residue. D64 serves as a coordination point for Ca(2+). Residue D105 is part of the active site.

The protein belongs to the phospholipase A2 family. Group II subfamily. D49 sub-subfamily. Ca(2+) serves as cofactor. In terms of tissue distribution, expressed by the venom gland.

The protein resides in the secreted. It catalyses the reaction a 1,2-diacyl-sn-glycero-3-phosphocholine + H2O = a 1-acyl-sn-glycero-3-phosphocholine + a fatty acid + H(+). Functionally, PLA2 catalyzes the calcium-dependent hydrolysis of the 2-acyl groups in 3-sn-phosphoglycerides. The protein is Basic phospholipase A2 PL-X' of Protobothrops flavoviridis (Habu).